We begin with the raw amino-acid sequence, 385 residues long: Cytochrome b (385 aa).

4 helical membrane-spanning segments follow: residues 32–52, 76–98, 113–133, and 179–199; these read FGSL…TLAM, WLVR…LHIG, TWAI…LGYV, and FFAL…MHLI. Heme b-binding residues include histidine 82 and histidine 96. 2 residues coordinate heme b: histidine 183 and histidine 197. Histidine 202 serves as a coordination point for a ubiquinone. 4 helical membrane passes run 226–246, 290–310, 322–342, and 349–369; these read FIFK…IFVF, LLGV…PITD, LSKV…QIGA, and FIEL…VIVP.

This sequence belongs to the cytochrome b family. Fungal cytochrome b-c1 complex contains 10 subunits; 3 respiratory subunits, 2 core proteins and 5 low-molecular weight proteins. Cytochrome b-c1 complex is a homodimer. Heme b is required as a cofactor.

The protein resides in the mitochondrion inner membrane. Functionally, component of the ubiquinol-cytochrome c reductase complex (complex III or cytochrome b-c1 complex) that is part of the mitochondrial respiratory chain. The b-c1 complex mediates electron transfer from ubiquinol to cytochrome c. Contributes to the generation of a proton gradient across the mitochondrial membrane that is then used for ATP synthesis. This chain is Cytochrome b (cob), found in Aspergillus tubingensis.